Reading from the N-terminus, the 203-residue chain is Mitotic spindle assembly checkpoint protein MAD2A (203 aa).

One can recognise an HORMA domain in the interval 14–196 (KGSTEIVTEF…TTIHKVESMV (183 aa)). Positions 194–203 (SMVAYKISND) are required for assuming the closed conformation and for interaction with cdc20.

The protein belongs to the MAD2 family. In terms of assembly, interacts with cdc20.

The protein resides in the nucleus. The protein localises to the chromosome. It localises to the centromere. Its subcellular location is the kinetochore. It is found in the cytoplasm. Functionally, component of the spindle-assembly checkpoint that prevents the onset of anaphase until all chromosomes are properly aligned at the metaphase plate. Required for the execution of the mitotic checkpoint which monitors the process of kinetochore-spindle attachment and inhibits the activity of the anaphase promoting complex until all chromosomes are aligned at the metaphase plate. This Dictyostelium discoideum (Social amoeba) protein is Mitotic spindle assembly checkpoint protein MAD2A (mad2l1-1).